We begin with the raw amino-acid sequence, 184 residues long: UPF0301 protein SPO0296 (184 aa).

This sequence belongs to the UPF0301 (AlgH) family.

The sequence is that of UPF0301 protein SPO0296 from Ruegeria pomeroyi (strain ATCC 700808 / DSM 15171 / DSS-3) (Silicibacter pomeroyi).